Reading from the N-terminus, the 542-residue chain is Dihydropyrimidinase (542 aa).

Zn(2+) contacts are provided by His-62, His-64, and Lys-167. Lys-167 carries the N6-carboxylysine modification. Tyr-172 lines the substrate pocket. Zn(2+) is bound by residues His-199 and His-255. Position 331 (Ser-331) interacts with substrate. Asp-358 lines the Zn(2+) pocket. Position 392 (Asn-392) interacts with substrate.

The protein belongs to the metallo-dependent hydrolases superfamily. Hydantoinase/dihydropyrimidinase family. In terms of assembly, homotetramer. Zn(2+) is required as a cofactor. Carboxylation allows a single lysine to coordinate two zinc ions.

The enzyme catalyses 5,6-dihydrouracil + H2O = 3-(carbamoylamino)propanoate + H(+). Its function is as follows. Catalyzes the second step of the reductive pyrimidine degradation, the reversible hydrolytic ring opening of dihydropyrimidines. Can catalyze the ring opening of 5,6-dihydrouracil to N-carbamyl-alanine and of 5,6-dihydrothymine to N-carbamyl-amino isobutyrate. This Lachancea kluyveri (strain ATCC 58438 / CBS 3082 / BCRC 21498 / NBRC 1685 / JCM 7257 / NCYC 543 / NRRL Y-12651) (Yeast) protein is Dihydropyrimidinase (PYD2).